The chain runs to 317 residues: Melanocyte-stimulating hormone receptor (317 aa).

The Extracellular portion of the chain corresponds to 1–37 (MPVQGSQRRLLGSLNSTPTATPHLGLAANQTGARCLE). N-linked (GlcNAc...) asparagine glycosylation occurs at asparagine 29. The helical transmembrane segment at 38–63 (VSIPDGLFLSLGLVSLVENVLVVTAI) threads the bilayer. The Cytoplasmic segment spans residues 64–72 (AKNRNLHSP). Residues 73 to 93 (MYCFICCLALSDLLVSGSNML) form a helical membrane-spanning segment. Residues 94-118 (ETAVILLLEAGALAARAAVVQQLDN) are Extracellular-facing. A helical transmembrane segment spans residues 119–140 (VIDVITCSSMLASLCFLGAIAV). The Cytoplasmic segment spans residues 141–163 (DRYISIFYALRYHSIVTLPRARR). The helical transmembrane segment at 164–183 (AVAAIWVASVLFSMLFIAYY) threads the bilayer. Over 184 to 191 (DHAAVLLC) the chain is Extracellular. Residues 192–211 (LVVFFLAMLVLMAVLYIHML) traverse the membrane as a helical segment. Residues 212–240 (ARARQHAQGIARLHKRQCPAHQGFGLKGA) are Cytoplasmic-facing. Residues 241 to 266 (ATLTILLGIFFLCWGPFFLHLTLIVL) form a helical membrane-spanning segment. The Extracellular segment spans residues 267 to 279 (CPQHPTCSCIFKN). A helical membrane pass occupies residues 280-300 (FNLFLALIICNAIIDPLIYAF). Topologically, residues 301 to 317 (RSQELRRTLKEVLLCSW) are cytoplasmic. Residue cysteine 315 is the site of S-palmitoyl cysteine attachment.

The protein belongs to the G-protein coupled receptor 1 family. As to quaternary structure, interacts with MGRN1, but does not undergo MGRN1-mediated ubiquitination; this interaction competes with GNAS-binding and thus inhibits agonist-induced cAMP production. Interacts with OPN3; the interaction results in a decrease in MC1R-mediated cAMP signaling and ultimately a decrease in melanin production in melanocytes.

The protein resides in the cell membrane. In terms of biological role, receptor for MSH (alpha, beta and gamma) and ACTH. The activity of this receptor is mediated by G proteins which activate adenylate cyclase. Mediates melanogenesis, the production of eumelanin (black/brown) and phaeomelanin (red/yellow), via regulation of cAMP signaling in melanocytes. This chain is Melanocyte-stimulating hormone receptor (MC1R), found in Cercopithecus mitis (Blue monkey).